Consider the following 160-residue polypeptide: UPF0262 protein Oant_0325 (160 aa).

It belongs to the UPF0262 family.

This is UPF0262 protein Oant_0325 from Brucella anthropi (strain ATCC 49188 / DSM 6882 / CCUG 24695 / JCM 21032 / LMG 3331 / NBRC 15819 / NCTC 12168 / Alc 37) (Ochrobactrum anthropi).